The primary structure comprises 68 residues: Riparin-1.6 (68 aa).

An N-terminal signal peptide occupies residues 1 to 15 (MKIIVFLAVLMLVSA). A propeptide spanning residues 16–41 (QVCLVSAAEMEHSSDNELSSRDLVKR) is cleaved from the precursor. Cysteines 47 and 53 form a disulfide. At Cys53 the chain carries Cysteine amide. The propeptide occupies 57–68 (DIESSEGANGGE).

In terms of tissue distribution, expressed by the skin glands.

The protein resides in the secreted. In Crinia riparia (Streambank froglet), this protein is Riparin-1.6.